The following is a 741-amino-acid chain: 1,4-alpha-glucan branching enzyme GlgB (741 aa).

Aspartate 420 (nucleophile) is an active-site residue. The active-site Proton donor is glutamate 473.

Belongs to the glycosyl hydrolase 13 family. GlgB subfamily. In terms of assembly, monomer.

It catalyses the reaction Transfers a segment of a (1-&gt;4)-alpha-D-glucan chain to a primary hydroxy group in a similar glucan chain.. The protein operates within glycan biosynthesis; glycogen biosynthesis. Catalyzes the formation of the alpha-1,6-glucosidic linkages in glycogen by scission of a 1,4-alpha-linked oligosaccharide from growing alpha-1,4-glucan chains and the subsequent attachment of the oligosaccharide to the alpha-1,6 position. This chain is 1,4-alpha-glucan branching enzyme GlgB, found in Pseudomonas syringae pv. syringae (strain B728a).